A 338-amino-acid chain; its full sequence is Anthranilate phosphoribosyltransferase (338 aa).

Residues G81, 84–85 (GD), T89, 91–94 (NIST), 109–117 (KHGNRALSS), and A121 contribute to the 5-phospho-alpha-D-ribose 1-diphosphate site. G81 serves as a coordination point for anthranilate. S93 provides a ligand contact to Mg(2+). N112 is an anthranilate binding site. R167 lines the anthranilate pocket. Residues D225 and E226 each contribute to the Mg(2+) site.

The protein belongs to the anthranilate phosphoribosyltransferase family. In terms of assembly, homodimer. The cofactor is Mg(2+).

It catalyses the reaction N-(5-phospho-beta-D-ribosyl)anthranilate + diphosphate = 5-phospho-alpha-D-ribose 1-diphosphate + anthranilate. Its pathway is amino-acid biosynthesis; L-tryptophan biosynthesis; L-tryptophan from chorismate: step 2/5. Catalyzes the transfer of the phosphoribosyl group of 5-phosphorylribose-1-pyrophosphate (PRPP) to anthranilate to yield N-(5'-phosphoribosyl)-anthranilate (PRA). The protein is Anthranilate phosphoribosyltransferase of Rhizobium etli (strain ATCC 51251 / DSM 11541 / JCM 21823 / NBRC 15573 / CFN 42).